We begin with the raw amino-acid sequence, 140 residues long: Hemoglobin subunit alpha-D (140 aa).

Residues 1–140 enclose the Globin domain; the sequence is MLTDSDKKLV…VCTVLAEKYR (140 aa). The heme b site is built by His57 and His86.

The protein belongs to the globin family. Heterotetramer of two alpha-D chains and two beta chains. Red blood cells.

Involved in oxygen transport from the lung to the various peripheral tissues. The chain is Hemoglobin subunit alpha-D (HBAD) from Columba livia (Rock dove).